Here is a 298-residue protein sequence, read N- to C-terminus: Centromere protein O (298 aa).

The segment at 29–49 is disordered; the sequence is NISNRKSEEPAVRKKESSLRT. Positions 33–49 are enriched in basic and acidic residues; the sequence is RKSEEPAVRKKESSLRT. Position 35 is a phosphoserine (Ser-35). A coiled-coil region spans residues 39–74; the sequence is AVRKKESSLRTKIRELRQQRDKLRAEVKQWGARVKE.

This sequence belongs to the CENP-O/MCM21 family. Component of the CENPA-CAD complex, composed of CENPI, CENPK, CENPL, CENPO, CENPP, CENPQ, CENPR and CENPS. The CENPA-CAD complex interacts with the CENPA-NAC complex, at least composed of CENPA, CENPC, CENPH, CENPM, CENPN, CENPT and CENPU.

Its subcellular location is the nucleus. The protein localises to the chromosome. It localises to the centromere. It is found in the kinetochore. Component of the CENPA-CAD (nucleosome distal) complex, a complex recruited to centromeres which is involved in assembly of kinetochore proteins, mitotic progression and chromosome segregation. May be involved in incorporation of newly synthesized CENPA into centromeres via its interaction with the CENPA-NAC complex. Modulates the kinetochore-bound levels of NDC80 complex. The protein is Centromere protein O (Cenpo) of Mus musculus (Mouse).